A 338-amino-acid chain; its full sequence is MTTLRLLISDSYDPWFNLAVEECIFRQMPATQRVLFLWRNADTVVIGRAQNPWKECNTRRMEEDNVRLARRSSGGGAVFHDLGNTCFTFMAGKPEYDKTISTHIVLAALNSLGVMADASGRNDLVVKTPDGDRKVSGSAYRETKDRGFHHGTLLLNADLSRLANYLNPDKKKLAAKGITSVRSRVANLTELLPGITHEQVCQAVTEAFFAHYGERVDAEVISPDKTPDLPNFAETFARQSSWEWNFGQAPAFSHLLDERFTWGGVELHFDVEKGVITRAQVFTDSLNPAPLEALGERLQGCQYRVDVLEQACESLIAEFPAQKGELRELAAWMAQAVR.

The BPL/LPL catalytic domain occupies 29-216 (PATQRVLFLW…AFFAHYGERV (188 aa)). Residues Arg71, 76 to 79 (GAVF), and Lys134 each bind ATP. Lys134 is a (R)-lipoate binding site.

Belongs to the LplA family. As to quaternary structure, monomer.

The protein resides in the cytoplasm. The enzyme catalyses L-lysyl-[lipoyl-carrier protein] + (R)-lipoate + ATP = N(6)-[(R)-lipoyl]-L-lysyl-[lipoyl-carrier protein] + AMP + diphosphate + H(+). The protein operates within protein modification; protein lipoylation via exogenous pathway; protein N(6)-(lipoyl)lysine from lipoate: step 1/2. Its pathway is protein modification; protein lipoylation via exogenous pathway; protein N(6)-(lipoyl)lysine from lipoate: step 2/2. Functionally, catalyzes both the ATP-dependent activation of exogenously supplied lipoate to lipoyl-AMP and the transfer of the activated lipoyl onto the lipoyl domains of lipoate-dependent enzymes. The chain is Lipoate-protein ligase A from Salmonella dublin (strain CT_02021853).